The following is a 340-amino-acid chain: Adenosine receptor A2b (340 aa).

At 1 to 6 (MNTMKT) the chain is on the extracellular side. The chain crosses the membrane as a helical span at residues 7–31 (TYIVLELIIAVLSIAGNVLVCWAVA). At 32–41 (INSTLKNATN) the chain is on the cytoplasmic side. The helical transmembrane segment at 42–65 (YFLVSLAVADIAVGLLAIPFAITI) threads the bilayer. Over 66-76 (SIGFQVDFHSC) the chain is Extracellular. Residues Cys76 and Cys171 are joined by a disulfide bond. The helical transmembrane segment at 77-99 (LFFACFVLVLTQSSIFSLLAVAI) threads the bilayer. At 100–119 (DRYLAIKIPLRYNSLVTGKR) the chain is on the cytoplasmic side. A helical membrane pass occupies residues 120 to 142 (ARGLIAVLWLLSFVIGLTPLMGW). Residues 143 to 178 (NKAMSGCPNSTNETGADHGAGHHGCFISCLFENVVT) lie on the Extracellular side of the membrane. Asn151 and Asn154 each carry an N-linked (GlcNAc...) asparagine glycan. Glu174 is a binding site for adenosine. Residues 179-203 (MSYMVYFNFFGCVLLPLIIMLGIYI) traverse the membrane as a helical segment. At 204-235 (KIFMVACKQLHQIELMGNSRTTLQKEVHAAKS) the chain is on the cytoplasmic side. The helical transmembrane segment at 236 to 259 (LAIIVGLFAFCWLPLHILNCITHF) threads the bilayer. Adenosine is bound at residue Asn254. The Extracellular segment spans residues 260–267 (HEEFSKSK). Residues 268-291 (PEWVMYVAIILSHANSVINPIIYA) form a helical membrane-spanning segment. The adenosine site is built by Ser279 and His280. Residues 292–340 (YRIRDFRYTFHKIISKILCKTDDFPKCTTDNNQHLTVTNVNAPAASVTI) are Cytoplasmic-facing. Cys310 carries the S-palmitoyl cysteine lipid modification.

This sequence belongs to the G-protein coupled receptor 1 family.

It is found in the cell membrane. Functionally, receptor for adenosine. The activity of this receptor is mediated by G proteins which activate adenylyl cyclase. The chain is Adenosine receptor A2b (ADORA2B) from Gallus gallus (Chicken).